A 264-amino-acid polypeptide reads, in one-letter code: Acyl-[acyl-carrier-protein]--UDP-N-acetylglucosamine O-acyltransferase (264 aa).

Belongs to the transferase hexapeptide repeat family. LpxA subfamily. In terms of assembly, homotrimer.

It localises to the cytoplasm. The catalysed reaction is a (3R)-hydroxyacyl-[ACP] + UDP-N-acetyl-alpha-D-glucosamine = a UDP-3-O-[(3R)-3-hydroxyacyl]-N-acetyl-alpha-D-glucosamine + holo-[ACP]. It functions in the pathway glycolipid biosynthesis; lipid IV(A) biosynthesis; lipid IV(A) from (3R)-3-hydroxytetradecanoyl-[acyl-carrier-protein] and UDP-N-acetyl-alpha-D-glucosamine: step 1/6. Its function is as follows. Involved in the biosynthesis of lipid A, a phosphorylated glycolipid that anchors the lipopolysaccharide to the outer membrane of the cell. In Rickettsia peacockii (strain Rustic), this protein is Acyl-[acyl-carrier-protein]--UDP-N-acetylglucosamine O-acyltransferase.